The chain runs to 779 residues: MKIRYSVLSTFIISALYSQDTQANLKHQCLLRVPHFAGEEITADQLNMPIEIEADRAVINQPKEANYSGNVTIKQGNRSIFADNVRIEQQAPQHRKAFLIGRYQYQDNLIQAEGHNALLDLQSKDAEVANTTYQLVGRQGRGEAESGQFTPQTRRLKNASFTACLLNDNAWSIEANEMVQHIKAGYAEMWHARFKIFDVPIFYSPYLQFPLGDQRRSGILTPKLYHSTKDGLIYSQPFYWNIAPNMDATFTSNYYSRRGWQINPEFRYLTALGQGILAGEYLANDRLDTYRPKDMNDRRYLFHWRHNMSFLTDWHLDVDYTNVSDRRYFSDFDSSYGNVTDGYALQHFKLGYYQPQYNLSISGKDFHTFDSFDNVKPYRVLPQIDFNYYQDQFLKDSRFSFFAQIARFENDSKSMPNAWRFHAEPIINIPFVNHYGSLNFETKLYASHYQQQKGENQTAEEVKKQLTRIIPQVKLDFQTVLEADKSLFSGFKQILEPRLQYVYRPYRDQSEIGSKSHESVGLGYDSALLQTDYYSLFNDRRYSGLDRISSANLITAGASTRFFNKKTGEEVFNISVGQTYYLRPSRVDSLAIDSTADRSSSWSVESNWRFQPKWNWHASYQYDTRLHKSSLANMSLQYKPSTENVFQLNYRYVNEDYINQNLSFNRYGQDIKQIGGMIGWNLTDKVAIMASHYRDIALKKAVETQLSLNYNTCCWSANLYVARQLTTTPIGAKDSIRNFYYDNKFGINFELRFGHDYSSGMHKMLSKGILPYVEQYGIN.

Positions 1 to 23 (MKIRYSVLSTFIISALYSQDTQA) are cleaved as a signal peptide.

The protein belongs to the LptD family. In terms of assembly, component of the lipopolysaccharide transport and assembly complex. Interacts with LptE and LptA.

Its subcellular location is the cell outer membrane. Together with LptE, is involved in the assembly of lipopolysaccharide (LPS) at the surface of the outer membrane. This Haemophilus ducreyi (strain 35000HP / ATCC 700724) protein is LPS-assembly protein LptD.